We begin with the raw amino-acid sequence, 980 residues long: Hypoxia up-regulated protein 1 (980 aa).

Residues 1–24 (MREKLSLWAIFCLVVAFLPSQTES) form the signal peptide. Disordered regions lie at residues 558–682 (EEES…DIAV) and 894–980 (KPKP…EDEL). Basic and acidic residues-rich tracts occupy residues 599-656 (AGKE…PEEK) and 896-906 (KPKDKAKDKNS). Polar residues predominate over residues 907–916 (TSESSKANST). 2 stretches are compositionally biased toward basic and acidic residues: residues 918–949 (DAEK…KAEE) and 960–980 (TDDK…EDEL). A Prevents secretion from ER motif is present at residues 977-980 (EDEL).

The protein belongs to the heat shock protein 70 family.

It localises to the endoplasmic reticulum lumen. In terms of biological role, has a pivotal role in cytoprotective cellular mechanisms triggered by oxygen deprivation. May play a role as a molecular chaperone and participate in protein folding. In Danio rerio (Zebrafish), this protein is Hypoxia up-regulated protein 1 (hyou1).